The primary structure comprises 972 residues: DNA topoisomerase 1 (972 aa).

Disordered regions lie at residues 1–210 (MSGD…VFVK) and 300–416 (HEQS…RQKA). Residues 11 to 31 (IHIQNGGSCEVVQSNGVTTNG) are compositionally biased toward polar residues. A compositionally biased stretch (basic residues) spans 32–50 (HGHHHHHHSSSSSSSKHKS). Composition is skewed to basic and acidic residues over residues 51 to 65 (SSKDKHRDREREHKS), 72 to 86 (SKEHKSSSRDKDRHK), and 93 to 103 (KHRDKDKERDG). A compositionally biased stretch (low complexity) spans 104–114 (SSNSHRSGSSS). Positions 125–138 (SKHKSSSGHHKRSS) are enriched in basic residues. The span at 139 to 151 (KDKERRDKDKDRG) shows a compositional bias: basic and acidic residues. The span at 173-183 (SHKSSSSSSSS) shows a compositional bias: low complexity. S303 bears the Phosphoserine mark. The residue at position 304 (Y304) is a Phosphotyrosine. The segment covering 316-330 (HDDDADEMNDDEEDV) has biased composition (acidic residues). Interaction with DNA stretches follow at residues 648–649 (KY), 711–716 (RAGNEK), and 807–809 (TAK). The 318-residue stretch at 655-972 (SSKLKGEKDH…VHMADENYRF (318 aa)) folds into the Topo IB-type catalytic domain. Y930 functions as the O-(3'-phospho-DNA)-tyrosine intermediate in the catalytic mechanism.

It belongs to the type IB topoisomerase family. In terms of assembly, interacts with Topors.

It localises to the nucleus. It is found in the cytoplasm. It carries out the reaction ATP-independent breakage of single-stranded DNA, followed by passage and rejoining.. Functionally, releases the supercoiling and torsional tension of DNA introduced during the DNA replication and transcription by transiently cleaving and rejoining one strand of the DNA duplex. Introduces a single-strand break via transesterification at a target site in duplex DNA. The scissile phosphodiester is attacked by the catalytic tyrosine of the enzyme, resulting in the formation of a DNA-(3'-phosphotyrosyl)-enzyme intermediate and the expulsion of a 5'-OH DNA strand. The free DNA strand then undergoes passage around the unbroken strand thus removing DNA supercoils. Finally, in the religation step, the DNA 5'-OH attacks the covalent intermediate to expel the active-site tyrosine and restore the DNA phosphodiester backbone. This is DNA topoisomerase 1 from Drosophila melanogaster (Fruit fly).